Reading from the N-terminus, the 101-residue chain is DNA-binding protein HU (101 aa).

It belongs to the bacterial histone-like protein family. Homodimer.

Histone-like DNA-binding protein which is capable of wrapping DNA to stabilize it, and thus to prevent its denaturation under extreme environmental conditions. The sequence is that of DNA-binding protein HU (hup) from Rickettsia bellii (strain RML369-C).